The following is a 102-amino-acid chain: Small ribosomal subunit protein uS10 (102 aa).

This sequence belongs to the universal ribosomal protein uS10 family. Part of the 30S ribosomal subunit.

Functionally, involved in the binding of tRNA to the ribosomes. The protein is Small ribosomal subunit protein uS10 of Mycoplasma mycoides subsp. mycoides SC (strain CCUG 32753 / NCTC 10114 / PG1).